The following is a 154-amino-acid chain: Ribosome maturation factor RimP (154 aa).

It belongs to the RimP family.

The protein resides in the cytoplasm. Functionally, required for maturation of 30S ribosomal subunits. This Cyanothece sp. (strain PCC 7425 / ATCC 29141) protein is Ribosome maturation factor RimP.